Reading from the N-terminus, the 697-residue chain is Phosphoribosylformylglycinamidine synthase subunit PurL (697 aa).

Histidine 34 is a catalytic residue. ATP is bound by residues tyrosine 37 and lysine 76. Glutamate 78 lines the Mg(2+) pocket. Substrate contacts are provided by residues 79–82 (SHNH) and arginine 101. The active-site Proton acceptor is histidine 80. Aspartate 102 contacts Mg(2+). Glutamine 224 provides a ligand contact to substrate. Mg(2+) is bound at residue aspartate 250. Position 294 to 296 (294 to 296 (ETQ)) interacts with substrate. Positions 472 and 509 each coordinate ATP. Serine 512 is a substrate binding site.

Belongs to the FGAMS family. In terms of assembly, monomer. Part of the FGAM synthase complex composed of 1 PurL, 1 PurQ and 2 PurS subunits.

It is found in the cytoplasm. The catalysed reaction is N(2)-formyl-N(1)-(5-phospho-beta-D-ribosyl)glycinamide + L-glutamine + ATP + H2O = 2-formamido-N(1)-(5-O-phospho-beta-D-ribosyl)acetamidine + L-glutamate + ADP + phosphate + H(+). The protein operates within purine metabolism; IMP biosynthesis via de novo pathway; 5-amino-1-(5-phospho-D-ribosyl)imidazole from N(2)-formyl-N(1)-(5-phospho-D-ribosyl)glycinamide: step 1/2. In terms of biological role, part of the phosphoribosylformylglycinamidine synthase complex involved in the purines biosynthetic pathway. Catalyzes the ATP-dependent conversion of formylglycinamide ribonucleotide (FGAR) and glutamine to yield formylglycinamidine ribonucleotide (FGAM) and glutamate. The FGAM synthase complex is composed of three subunits. PurQ produces an ammonia molecule by converting glutamine to glutamate. PurL transfers the ammonia molecule to FGAR to form FGAM in an ATP-dependent manner. PurS interacts with PurQ and PurL and is thought to assist in the transfer of the ammonia molecule from PurQ to PurL. The protein is Phosphoribosylformylglycinamidine synthase subunit PurL of Pyrobaculum aerophilum (strain ATCC 51768 / DSM 7523 / JCM 9630 / CIP 104966 / NBRC 100827 / IM2).